The primary structure comprises 223 residues: Probable GTP-binding protein EngB (223 aa).

The EngB-type G domain maps to Thr25–Glu199. GTP is bound by residues Gly33–Ser40, Gly60–His64, Asp78–Gly81, Thr145–Asp148, and Phe178–Ser180. Positions 40 and 62 each coordinate Mg(2+).

It belongs to the TRAFAC class TrmE-Era-EngA-EngB-Septin-like GTPase superfamily. EngB GTPase family. Requires Mg(2+) as cofactor.

Necessary for normal cell division and for the maintenance of normal septation. The chain is Probable GTP-binding protein EngB from Nitrosomonas eutropha (strain DSM 101675 / C91 / Nm57).